The sequence spans 909 residues: Protein virilizer (909 aa).

Over residues 746-784 the composition is skewed to polar residues; the sequence is STSKNTNTNVSKQQQQPQNSTPCSSNRFLFNKSSLISQE. A disordered region spans residues 746–824; it reads STSKNTNTNV…TNMTRQPTTL (79 aa). A compositionally biased stretch (low complexity) spans 785-799; that stretch reads SNGSNNNSGTQGPGS. The span at 800 to 810 shows a compositional bias: polar residues; that stretch reads MNESYSLDNSF. The span at 811 to 824 shows a compositional bias: low complexity; that stretch reads NTTNTNMTRQPTTL. Phosphoserine is present on residues S856 and S898.

This sequence belongs to the vir family. As to quaternary structure, component of the MIS (mRNA N6-methyladenosine (m6A) methylation) complex, at least composed of IME4, KAR4, MUM2, SLZ1, and VIR1. Interacts with KAR4. Interacts with SLZ1. Interacts with MUM2. Interacts with IME4.

It is found in the cytoplasm. Its subcellular location is the nucleus. The protein resides in the nucleolus. Its function is as follows. Component of the MIS complex, a complex that mediates N6-methyladenosine (m6A) methylation of meiotic mRNAs and is required for initiation of meiosis, progression through the meiotic divisions and sporulation. In the complex, performs a scaffolding role stabilizing the other complex members. In Saccharomyces cerevisiae (strain ATCC 204508 / S288c) (Baker's yeast), this protein is Protein virilizer.